The following is a 372-amino-acid chain: Glutamine synthetase (372 aa).

The GS beta-grasp domain occupies Ile-26 to Gly-105. Residues His-112–Leu-372 enclose the GS catalytic domain.

Belongs to the glutamine synthetase family. In terms of assembly, homooctamer.

Its subcellular location is the cytoplasm. The catalysed reaction is L-glutamate + NH4(+) + ATP = L-glutamine + ADP + phosphate + H(+). The protein is Glutamine synthetase (GLN1) of Kluyveromyces lactis (strain ATCC 8585 / CBS 2359 / DSM 70799 / NBRC 1267 / NRRL Y-1140 / WM37) (Yeast).